The chain runs to 607 residues: UvrABC system protein C (607 aa).

Residues 15 to 93 form the GIY-YIG domain; sequence RKPGVYRMLD…IKELKPPYNI (79 aa). Residues 203 to 238 form the UVR domain; sequence REVADQLSTDMEAAAAALEFEKAALLRDQLAAIQAV. Basic residues predominate over residues 542 to 551; the sequence is HRARRGKARK. Residues 542–561 are disordered; sequence HRARRGKARKQSTLDEIPGI.

This sequence belongs to the UvrC family. In terms of assembly, interacts with UvrB in an incision complex.

It localises to the cytoplasm. Functionally, the UvrABC repair system catalyzes the recognition and processing of DNA lesions. UvrC both incises the 5' and 3' sides of the lesion. The N-terminal half is responsible for the 3' incision and the C-terminal half is responsible for the 5' incision. This is UvrABC system protein C from Alcanivorax borkumensis (strain ATCC 700651 / DSM 11573 / NCIMB 13689 / SK2).